A 367-amino-acid polypeptide reads, in one-letter code: UDP-N-acetylglucosamine--N-acetylmuramyl-(pentapeptide) pyrophosphoryl-undecaprenol N-acetylglucosamine transferase (367 aa).

Residues 15–17 (TGG), N127, R163, S191, I249, and Q294 contribute to the UDP-N-acetyl-alpha-D-glucosamine site.

Belongs to the glycosyltransferase 28 family. MurG subfamily.

It localises to the cell inner membrane. The catalysed reaction is di-trans,octa-cis-undecaprenyl diphospho-N-acetyl-alpha-D-muramoyl-L-alanyl-D-glutamyl-meso-2,6-diaminopimeloyl-D-alanyl-D-alanine + UDP-N-acetyl-alpha-D-glucosamine = di-trans,octa-cis-undecaprenyl diphospho-[N-acetyl-alpha-D-glucosaminyl-(1-&gt;4)]-N-acetyl-alpha-D-muramoyl-L-alanyl-D-glutamyl-meso-2,6-diaminopimeloyl-D-alanyl-D-alanine + UDP + H(+). Its pathway is cell wall biogenesis; peptidoglycan biosynthesis. Its function is as follows. Cell wall formation. Catalyzes the transfer of a GlcNAc subunit on undecaprenyl-pyrophosphoryl-MurNAc-pentapeptide (lipid intermediate I) to form undecaprenyl-pyrophosphoryl-MurNAc-(pentapeptide)GlcNAc (lipid intermediate II). In Burkholderia pseudomallei (strain 1710b), this protein is UDP-N-acetylglucosamine--N-acetylmuramyl-(pentapeptide) pyrophosphoryl-undecaprenol N-acetylglucosamine transferase.